A 249-amino-acid chain; its full sequence is Granaticin polyketide synthase putative ketoacyl reductase 2 (249 aa).

12–36 (LVTGSSSGIGQTVAQRLAAEGYRVV) is a binding site for NAD(+). A substrate-binding site is contributed by serine 144. Tyrosine 157 functions as the Proton acceptor in the catalytic mechanism.

It belongs to the short-chain dehydrogenases/reductases (SDR) family.

The protein operates within antibiotic biosynthesis; granaticin biosynthesis. The polypeptide is Granaticin polyketide synthase putative ketoacyl reductase 2 (gra-orf6) (Streptomyces violaceoruber).